Here is an 81-residue protein sequence, read N- to C-terminus: UPF0181 protein Spro_2806 (81 aa).

The tract at residues 43–81 (EKHQGDQVSVMFDDEDDDEEYQERPDDQADDDSEEDENY) is disordered. Acidic residues-rich tracts occupy residues 54-63 (FDDEDDDEEY) and 70-81 (QADDDSEEDENY).

The protein belongs to the UPF0181 family.

In Serratia proteamaculans (strain 568), this protein is UPF0181 protein Spro_2806.